The sequence spans 209 residues: Glycerol-3-phosphate acyltransferase (209 aa).

5 helical membrane-spanning segments follow: residues 4–24 (IAIGMIIFAYLCGSVSNAILI), 53–75 (LAAAGVMVFDVLKGMIPVWIGYG), 80–102 (PFWLGLVAIAACLGHIYPIFFHF), 112–132 (LGAIAPIGYDLSGLMIGTWLL), and 138–158 (GYSSLGAIVSALIAPFYVWWF).

Belongs to the PlsY family. As to quaternary structure, probably interacts with PlsX.

The protein localises to the cell inner membrane. It catalyses the reaction an acyl phosphate + sn-glycerol 3-phosphate = a 1-acyl-sn-glycero-3-phosphate + phosphate. It functions in the pathway lipid metabolism; phospholipid metabolism. Functionally, catalyzes the transfer of an acyl group from acyl-phosphate (acyl-PO(4)) to glycerol-3-phosphate (G3P) to form lysophosphatidic acid (LPA). This enzyme utilizes acyl-phosphate as fatty acyl donor, but not acyl-CoA or acyl-ACP. The chain is Glycerol-3-phosphate acyltransferase from Sodalis glossinidius (strain morsitans).